We begin with the raw amino-acid sequence, 56 residues long: Large ribosomal subunit protein bL32 (56 aa).

The interval 1–34 (MAVQQNKPSRSKRGMRRAHDALKTSTISVDKTSG) is disordered.

The protein belongs to the bacterial ribosomal protein bL32 family.

This is Large ribosomal subunit protein bL32 from Baumannia cicadellinicola subsp. Homalodisca coagulata.